A 20-amino-acid polypeptide reads, in one-letter code: Agglutinin beta-3 chain (20 aa).

It belongs to the jacalin lectin family. In terms of assembly, tetramer of four alpha chains associated with two or four beta chains.

D-galactose-specific lectin, binds the T-antigen structure Gal-beta1,3-GalNAc (Thomsen-Friedenreich-antigen-specific lectin). Potent and selective stimulant of distinct T- and B-cell functions. Shows a unique ability to specifically recognize IgA-1 from human serum. The sequence is that of Agglutinin beta-3 chain from Artocarpus integer (Jack fruit).